The primary structure comprises 117 residues: Ig heavy chain V region 3 (117 aa).

Residues M1–S19 form the signal peptide. The segment at Q20–T49 is framework-1. A disulfide bridge links C41 with C115. The complementarity-determining-1 stretch occupies residues S50–D54. A framework-2 region spans residues W55 to G68. The complementarity-determining-2 stretch occupies residues N69–D85. The interval K86 to R117 is framework-3.

This Mus musculus (Mouse) protein is Ig heavy chain V region 3 (Ighv1-61).